Here is a 330-residue protein sequence, read N- to C-terminus: FKBP12-interacting protein of 37 kDa (330 aa).

Position 1 is an N-acetylmethionine (Met-1). The span at 1 to 12 (MEFSSQDDDFGG) shows a compositional bias: acidic residues. Residues 1–43 (MEFSSQDDDFGGDDSAANATRASGNRRSFGDLEDDEDDIFGST) are disordered. Positions 17–26 (ANATRASGNR) are enriched in polar residues. Residues 56–308 (SLRGSLKNCK…KGLEIVSELV (253 aa)) are a coiled coil.

This sequence belongs to the fl(2)d family. In terms of assembly, forms homodimers. Interacts with MTA/EMB1706. Interacts with FKBP12; interaction is inhibited by the immunosuppressive drug FK506. Interacts with VIR. Associates with MTA, MTB, VIR and HAKAI to form the m6A writer complex which is essential for adenosine methylation at specific mRNA sequences. In terms of tissue distribution, ubiquitously expressed with higher levels in primary and lateral roots, leaves, trichomes, and in pollen grains (at protein level).

Its subcellular location is the nucleus speckle. It is found in the nucleus. The protein resides in the nucleoplasm. Probable regulatory subunit of the N6-methyltransferase complex, a multiprotein complex that mediates N6-methyladenosine (m6A) methylation at the 5'-[AG]GAC-3' consensus sites of some mRNAs. Associates with MTA, MTB, VIR and HAKAI to form the m6A writer complex which is essential for adenosine methylation at specific mRNA sequences. N6-methyladenosine (m6A) plays a role in mRNA stability, processing, translation efficiency and editing. Essential protein required during endosperm development and embryogenesis. Involved in endoreduplication, especially in trichomes. May play a role in splicing events. This chain is FKBP12-interacting protein of 37 kDa, found in Arabidopsis thaliana (Mouse-ear cress).